Here is a 116-residue protein sequence, read N- to C-terminus: Somatostatin (116 aa).

The first 24 residues, 1-24 (MLSCRLQCALAALCIVLALGGVTG), serve as a signal peptide directing secretion. The propeptide occupies 35 to 88 (LQKSLAAATGKQELAKYFLAELLSEPNQTENDALEPEDLPQAAEQDEMRLELQR). Position 43 is a threonine amide (T43). A disulfide bridge connects residues C105 and C116.

The protein belongs to the somatostatin family. C-terminal amidation of the neuronostatin peptide is required for its biological activity, including for the regulation of mean arterial pressure. As to expression, in the pancreas, somatostatin is expressed in delta cells of the islets of Langerhans. In the stomach, it is expressed in parietal cells of oxyntic mucosa and in the small intestine, it is found in the villus (at protein level). Neuronostatin is expressed in the pancreas in delta cells of the islets of Langerhans, as well as in the stomach, in parietal cells of oxyntic mucosa and in the small intestine, in the villus (at protein level).

Its subcellular location is the secreted. In terms of biological role, inhibits the secretion of pituitary hormones, including that of growth hormone/somatotropin (GH1), PRL, ACTH, luteinizing hormone (LH) and TSH. Also impairs ghrelin- and GnRH-stimulated secretion of GH1 and LH; the inhibition of ghrelin-stimulated secretion of GH1 can be further increased by neuronostatin. Its function is as follows. May enhance low-glucose-induced glucagon release by pancreatic alpha cells. This effect may be mediated by binding to GPR107 and PKA activation. May regulate cardiac contractile function. May compromise cardiomyocyte viability. In the central nervous system, may impair memory retention and may affect hippocampal excitability. May also have anxiolytic and anorexigenic effects. May play a role in arterial pressure regulation. May inhibit basal, but not ghrelin- or GnRH-stimulated secretion of GH1 or LH, but does not affect the release of other pituitary hormones, including PRL, ACTH, FSH or TSH. Potentiates inhibitory action of somatostatin on ghrelin-stimulated secretion of GH1, but not that on GnRH-stimulated secretion of LH. The sequence is that of Somatostatin (Sst) from Mus musculus (Mouse).